The primary structure comprises 421 residues: D-amino acid dehydrogenase (421 aa).

FAD is bound at residue 4–18; sequence VLVLGSGVVGLTSAW.

This sequence belongs to the DadA oxidoreductase family. It depends on FAD as a cofactor.

The catalysed reaction is a D-alpha-amino acid + A + H2O = a 2-oxocarboxylate + AH2 + NH4(+). In terms of biological role, oxidative deamination of D-amino acids. This Vibrio cholerae serotype O1 (strain ATCC 39315 / El Tor Inaba N16961) protein is D-amino acid dehydrogenase.